A 472-amino-acid polypeptide reads, in one-letter code: uncharacterized protein (472 aa).

2 stretches are compositionally biased toward low complexity: residues 1-21 and 63-74; these read MAFS…SRPG and ASSLPAPASSSP. The interval 1–74 is disordered; sequence MAFSSSSLRR…SLPAPASSSP (74 aa).

This is an uncharacterized protein from Equus caballus (Horse).